A 254-amino-acid chain; its full sequence is 5-oxoprolinase subunit A (254 aa).

The protein belongs to the LamB/PxpA family. Forms a complex composed of PxpA, PxpB and PxpC.

It catalyses the reaction 5-oxo-L-proline + ATP + 2 H2O = L-glutamate + ADP + phosphate + H(+). Functionally, catalyzes the cleavage of 5-oxoproline to form L-glutamate coupled to the hydrolysis of ATP to ADP and inorganic phosphate. The chain is 5-oxoprolinase subunit A from Bacillus mycoides (strain KBAB4) (Bacillus weihenstephanensis).